The primary structure comprises 985 residues: Guanine nucleotide exchange protein smcr8b (985 aa).

Residues 47-225 (ISSAKLKKDF…VKCSSEREPI (179 aa)) enclose the uDENN FLCN/SMCR8-type domain. Positions 242 to 292 (NEKSSHTDEISPQEKDGCGNSRKVEVKLENENRSHFEHEQYGKQRKDKPDK) are enriched in basic and acidic residues. Disordered stretches follow at residues 242–301 (NEKS…PLAN), 502–528 (QSQV…SPAE), and 639–659 (EESP…EDNN). In terms of domain architecture, cDENN FLCN/SMCR8-type spans 390–895 (RLKTLEELCD…LINLLVEPKS (506 aa)). Over residues 502-514 (QSQVQHSTLNTPS) the composition is skewed to polar residues. A dDENN FLCN/SMCR8-type domain is found at 904–962 (FTFAQSVQSKLVTKAFLLTFSHGHPSPSRPQGSSGTECFLSELHTDDKKILRYLSELIK).

The protein belongs to the SMCR8 family. Component of the C9orf72-SMCR8 complex. The C9orf72-SMCR8 complex associates with the ATG1/ULK1 kinase complex.

The protein localises to the cytoplasm. It localises to the nucleus. In terms of biological role, component of the C9orf72-SMCR8 complex, a complex that has guanine nucleotide exchange factor (GEF) activity and regulates autophagy. In the complex, C9orf72 and SMCR8 probably constitute the catalytic subunits that promote the exchange of GDP to GTP, converting inactive GDP-bound RAB8A and RAB39B into their active GTP-bound form, thereby promoting autophagosome maturation. The C9orf72-SMCR8 complex also acts as a negative regulator of autophagy initiation by interacting with the ATG1/ULK1 kinase complex and inhibiting its protein kinase activity. The protein is Guanine nucleotide exchange protein smcr8b (smcr8b) of Danio rerio (Zebrafish).